We begin with the raw amino-acid sequence, 134 residues long: Holo-[acyl-carrier-protein] synthase (134 aa).

The Mg(2+) site is built by Asp8 and Glu58.

It belongs to the P-Pant transferase superfamily. AcpS family. Mg(2+) is required as a cofactor.

It is found in the cytoplasm. The catalysed reaction is apo-[ACP] + CoA = holo-[ACP] + adenosine 3',5'-bisphosphate + H(+). Its function is as follows. Transfers the 4'-phosphopantetheine moiety from coenzyme A to a Ser of acyl-carrier-protein. The sequence is that of Holo-[acyl-carrier-protein] synthase from Ruminiclostridium cellulolyticum (strain ATCC 35319 / DSM 5812 / JCM 6584 / H10) (Clostridium cellulolyticum).